The sequence spans 308 residues: Ornithine carbamoyltransferase (308 aa).

Carbamoyl phosphate is bound by residues 51–54 (STRT), Q78, R102, and 129–132 (HPTQ). Residues N160, D224, and 228–229 (SM) each bind L-ornithine. Residues 264-265 (CL) and R292 each bind carbamoyl phosphate.

The protein belongs to the aspartate/ornithine carbamoyltransferase superfamily. OTCase family.

It localises to the cytoplasm. The enzyme catalyses carbamoyl phosphate + L-ornithine = L-citrulline + phosphate + H(+). Its pathway is amino-acid biosynthesis; L-arginine biosynthesis; L-arginine from L-ornithine and carbamoyl phosphate: step 1/3. Reversibly catalyzes the transfer of the carbamoyl group from carbamoyl phosphate (CP) to the N(epsilon) atom of ornithine (ORN) to produce L-citrulline. The protein is Ornithine carbamoyltransferase of Caldicellulosiruptor saccharolyticus (strain ATCC 43494 / DSM 8903 / Tp8T 6331).